We begin with the raw amino-acid sequence, 478 residues long: Cytochrome c-552 (478 aa).

The N-terminal stretch at 1–26 is a signal peptide; that stretch reads MARKTLRARRFFSLIFPFFFITSVYA. His-94 contributes to the heme c binding site. The heme site is built by Cys-122, Cys-125, and Lys-126. 6 residues coordinate heme c: Cys-160, Cys-163, His-164, Cys-209, Cys-212, and His-213. Ca(2+) contacts are provided by Glu-215, Tyr-216, Lys-261, and Gln-263. Tyr-216 lines the substrate pocket. Position 264 (His-264) interacts with substrate. Heme c is bound by residues His-275, Cys-282, Cys-285, His-286, His-301, Cys-314, Cys-317, His-318, and His-393.

Belongs to the cytochrome c-552 family. Ca(2+) serves as cofactor. The cofactor is heme c.

It is found in the periplasm. It carries out the reaction 6 Fe(III)-[cytochrome c] + NH4(+) + 2 H2O = 6 Fe(II)-[cytochrome c] + nitrite + 8 H(+). It functions in the pathway nitrogen metabolism; nitrate reduction (assimilation). In terms of biological role, catalyzes the reduction of nitrite to ammonia, consuming six electrons in the process. In Salmonella typhi, this protein is Cytochrome c-552.